Consider the following 196-residue polypeptide: uncharacterized protein (196 aa).

The protein belongs to the flavoredoxin family. Requires FMN as cofactor.

This is an uncharacterized protein from Aquifex aeolicus (strain VF5).